The chain runs to 507 residues: Putative histone deacetylase 2 (507 aa).

The segment at 29–342 is histone deacetylase; that stretch reads RNVAYYYHKD…WALETGVILG (314 aa). Residue His-162 is part of the active site. A disordered region spans residues 444–507; that stretch reads EECFVEEDSK…RKDLNIPGIP (64 aa). A compositionally biased stretch (basic and acidic residues) spans 482 to 501; sequence SHSDVIEEAKYEDRDRRKDL.

This sequence belongs to the histone deacetylase family. HD type 1 subfamily. In terms of assembly, may be a component of a histone deacetylase complex containing saeg-2, saeg-1 and hda-2.

The protein localises to the nucleus. The catalysed reaction is N(6)-acetyl-L-lysyl-[histone] + H2O = L-lysyl-[histone] + acetate. Functionally, probably responsible for the deacetylation of lysine residues on the N-terminal part of the core histones (H2A, H2B, H3 and H4). Histone deacetylation gives a tag for epigenetic repression and plays an important role in transcriptional regulation, cell cycle progression and developmental events. Histone deacetylases act via the formation of large multiprotein complexes. As a likely component of a histone deacetylase complex, together with saeg-1 and hda-2, functions downstream of the cAMP-dependent kinase egl-4 to regulate the expression of genes required for egg-laying and forgaging. This chain is Putative histone deacetylase 2 (hda-2), found in Caenorhabditis elegans.